The sequence spans 416 residues: Gamma-glutamyl phosphate reductase (416 aa).

It belongs to the gamma-glutamyl phosphate reductase family.

The protein resides in the cytoplasm. The enzyme catalyses L-glutamate 5-semialdehyde + phosphate + NADP(+) = L-glutamyl 5-phosphate + NADPH + H(+). It functions in the pathway amino-acid biosynthesis; L-proline biosynthesis; L-glutamate 5-semialdehyde from L-glutamate: step 2/2. In terms of biological role, catalyzes the NADPH-dependent reduction of L-glutamate 5-phosphate into L-glutamate 5-semialdehyde and phosphate. The product spontaneously undergoes cyclization to form 1-pyrroline-5-carboxylate. In Vibrio cholerae serotype O1 (strain ATCC 39541 / Classical Ogawa 395 / O395), this protein is Gamma-glutamyl phosphate reductase.